We begin with the raw amino-acid sequence, 161 residues long: MNARRKKRLTLAVALIGGVAAIASLLLYALNSNLNLFYTPTEIVQGKKDTGVLPEVGQRIRVGGMVTIGSMVRDPDSLHVEFAVHDAAGGEILVTYDDLLPDLFREGQGIVAQGVLIEGGKLQATEVLAKHDENYMPPEVAEAMGQTHEKLDYNEQQKTSY.

Residues 1-8 (MNARRKKR) lie on the Cytoplasmic side of the membrane. The chain crosses the membrane as a helical; Signal-anchor for type II membrane protein span at residues 9–29 (LTLAVALIGGVAAIASLLLYA). At 30 to 161 (LNSNLNLFYT…DYNEQQKTSY (132 aa)) the chain is on the periplasmic side. Positions 131 and 135 each coordinate heme.

Belongs to the CcmE/CycJ family.

It localises to the cell inner membrane. In terms of biological role, heme chaperone required for the biogenesis of c-type cytochromes. Transiently binds heme delivered by CcmC and transfers the heme to apo-cytochromes in a process facilitated by CcmF and CcmH. This Shewanella sediminis (strain HAW-EB3) protein is Cytochrome c-type biogenesis protein CcmE.